The primary structure comprises 135 residues: Histone H2A (135 aa).

It belongs to the histone H2A family. As to quaternary structure, the nucleosome is a histone octamer containing two molecules each of H2A, H2B, H3 and H4 assembled in one H3-H4 heterotetramer and two H2A-H2B heterodimers. The octamer wraps approximately 147 bp of DNA.

It localises to the nucleus. The protein localises to the chromosome. Core component of nucleosome. Nucleosomes wrap and compact DNA into chromatin, limiting DNA accessibility to the cellular machineries which require DNA as a template. Histones thereby play a central role in transcription regulation, DNA repair, DNA replication and chromosomal stability. DNA accessibility is regulated via a complex set of post-translational modifications of histones, also called histone code, and nucleosome remodeling. In Trypanosoma cruzi, this protein is Histone H2A.